The sequence spans 63 residues: Large ribosomal subunit protein uL30 (63 aa).

The protein belongs to the universal ribosomal protein uL30 family. In terms of assembly, part of the 50S ribosomal subunit.

The polypeptide is Large ribosomal subunit protein uL30 (Chlorobium chlorochromatii (strain CaD3)).